The sequence spans 206 residues: Large ribosomal subunit protein uL4 (206 aa).

Residues 47-76 are disordered; it reads GTQSAKTRAEVSGGGIKPWRQKGTGRARQG.

This sequence belongs to the universal ribosomal protein uL4 family. In terms of assembly, part of the 50S ribosomal subunit.

In terms of biological role, one of the primary rRNA binding proteins, this protein initially binds near the 5'-end of the 23S rRNA. It is important during the early stages of 50S assembly. It makes multiple contacts with different domains of the 23S rRNA in the assembled 50S subunit and ribosome. Functionally, forms part of the polypeptide exit tunnel. In Clostridium botulinum (strain Okra / Type B1), this protein is Large ribosomal subunit protein uL4.